An 888-amino-acid chain; its full sequence is G-protein coupled receptor family C group 6 member A (888 aa).

The first 15 residues, 1-15 (MALLMTCFVIVFAAS), serve as a signal peptide directing secretion. Over 16–568 (QPCQTPDDLV…KEMEYLDSLA (553 aa)) the chain is Extracellular. Residues N251, N322, N532, and N544 are each glycosylated (N-linked (GlcNAc...) asparagine). Residues 569-589 (ILLLALSLLGILFVLAIGIIF) form a helical membrane-spanning segment. Residues 590–604 (TRNLNTPVVKSSGEL) lie on the Cytoplasmic side of the membrane. The chain crosses the membrane as a helical span at residues 605 to 625 (MVRYVILFCHFLNFAGTGFFI). The Extracellular segment spans residues 626–641 (REPQSFTCKTRQTLIC). The chain crosses the membrane as a helical span at residues 642 to 662 (MSFTLCISYILMKSLKILLAF). Topologically, residues 663 to 676 (SSKLQNFLKCFYKP) are cytoplasmic. The helical transmembrane segment at 677–697 (IPIIFTCTGIVVVCTLLIFAA) threads the bilayer. Residues 698–718 (PAVGQNVSLPRVIIFECEEGS) are Extracellular-facing. A helical transmembrane segment spans residues 719–739 (ILAFGSMLGYAAILAFMCFIC). Topologically, residues 740–754 (AFKGRKFPENYNEAK) are cytoplasmic. Residues 755 to 775 (FITFGMLIYFIAWITFIPIYT) form a helical membrane-spanning segment. Over 776–779 (FGKY) the chain is Extracellular. Residues 780–800 (MLVVEIIIILISNYGICCMFF) form a helical membrane-spanning segment. The Cytoplasmic segment spans residues 801–888 (PKCYVILSKQ…ALPPKRISSI (88 aa)).

Belongs to the G-protein coupled receptor 3 family. In terms of assembly, homodimer; disulfide-linked.

The protein localises to the cell membrane. In terms of biological role, receptor activated by multiple ligands, including osteocalcin (BGLAP), basic amino acids, and various cations. Activated by amino acids with a preference for basic amino acids such as L-Lys, L-Arg and L-ornithine but also by small and polar amino acids. The L-alpha amino acids respond is augmented by divalent cations Ca(2+) and Mg(2+). Seems to act through a G(q)/G(11) and G(i)-coupled pathway. Regulates testosterone production by acting as a ligand for uncarboxylated osteocalcin hormone: osteocalcin-binding at the surface of Leydig cells initiates a signaling response that promotes the expression of enzymes required for testosterone synthesis in a CREB-dependent manner. Mediates the non-genomic effects of androgens in multiple tissue. May coordinate nutritional and hormonal anabolic signals through the sensing of extracellular amino acids, osteocalcin, divalent ions and its responsiveness to anabolic steroids. In Bos taurus (Bovine), this protein is G-protein coupled receptor family C group 6 member A (GPRC6A).